Here is a 322-residue protein sequence, read N- to C-terminus: N-acetyl-gamma-glutamyl-phosphate reductase (322 aa).

C132 is an active-site residue.

The protein belongs to the NAGSA dehydrogenase family. Type 1 subfamily.

It is found in the cytoplasm. The catalysed reaction is N-acetyl-L-glutamate 5-semialdehyde + phosphate + NADP(+) = N-acetyl-L-glutamyl 5-phosphate + NADPH + H(+). It functions in the pathway amino-acid biosynthesis; L-arginine biosynthesis; N(2)-acetyl-L-ornithine from L-glutamate: step 3/4. In terms of biological role, catalyzes the NADPH-dependent reduction of N-acetyl-5-glutamyl phosphate to yield N-acetyl-L-glutamate 5-semialdehyde. The sequence is that of N-acetyl-gamma-glutamyl-phosphate reductase from Parabacteroides distasonis (strain ATCC 8503 / DSM 20701 / CIP 104284 / JCM 5825 / NCTC 11152).